The following is a 300-amino-acid chain: Protoheme IX farnesyltransferase (300 aa).

9 helical membrane-spanning segments follow: residues 24–44 (VTQLAVFCAVIGMFLATPGMV), 48–68 (VLLGGTIGIGLLAGSAFAINC), 94–114 (LQILAFSTVLGGLGAWTLYTF), 118–138 (LTMWLTIATFVGYAVIYTLLL), 146–166 (IVIGGASGAMPPALGWAAVTG), 172–192 (AWILVLIIFVWTPPHFWVLAL), 217–237 (LHILLYTVILFAVTMMPFISG), 239–259 (SGAVYLTSAVLLGALFLAYAW), and 278–298 (IVYLSLLFAALLVDHYARPVI).

The protein belongs to the UbiA prenyltransferase family. Protoheme IX farnesyltransferase subfamily.

It localises to the cell inner membrane. It carries out the reaction heme b + (2E,6E)-farnesyl diphosphate + H2O = Fe(II)-heme o + diphosphate. It participates in porphyrin-containing compound metabolism; heme O biosynthesis; heme O from protoheme: step 1/1. In terms of biological role, converts heme B (protoheme IX) to heme O by substitution of the vinyl group on carbon 2 of heme B porphyrin ring with a hydroxyethyl farnesyl side group. The sequence is that of Protoheme IX farnesyltransferase from Burkholderia pseudomallei (strain 1106a).